A 2038-amino-acid chain; its full sequence is Non-reducing polyketide synthase ZEA1 (2038 aa).

An N-terminal acylcarrier protein transacylase domain (SAT) region spans residues 9–246 (LLFGDQTDSW…NELNIHALQH (238 aa)). In terms of domain architecture, Ketosynthase family 3 (KS3) spans 364–794 (PGRIAIVGMA…GGNACILLED (431 aa)). Active-site for beta-ketoacyl synthase activity residues include C537, H672, and H711. A malonyl-CoA:ACP transacylase (MAT) domain region spans residues 888–1172 (VFVFTGQGSH…VCSSFVRATL (285 aa)). S979 serves as the catalytic For acyl/malonyl transferase activity. Residues 1221–1572 (SLLNLPTYAW…HFHEVENAVL (352 aa)) form a product template (PT) domain region. Residues 1254-1405 (HETFKANIST…GQLIQARWDK (152 aa)) are N-terminal hotdog fold. The region spanning 1254 to 1573 (HETFKANIST…FHEVENAVLD (320 aa)) is the PKS/mFAS DH domain. A C-terminal hotdog fold region spans residues 1425–1573 (ISHRLQPQIL…FHEVENAVLD (149 aa)). One can recognise a Carrier domain in the interval 1616–1693 (QSDAHVLDSI…DLRRVFAPKS (78 aa)). Position 1653 is an O-(pantetheine 4'-phosphoryl)serine (S1653). The disordered stretch occupies residues 1700–1738 (NDLSRPSLVDDTSQALQSSGSESFDQPPTSVTSTSDSGS). The segment covering 1709–1737 (DDTSQALQSSGSESFDQPPTSVTSTSDSG) has biased composition (polar residues). The segment at 1778-1882 (TGTIATYIHL…PRSKTVEDKN (105 aa)) is thioesterase (TE) domain. The For thioesterase activity role is filled by H2021.

It functions in the pathway mycotoxin biosynthesis. Functionally, non-reducing polyketide synthase; part of the gene cluster that mediates the biosynthesis of zearalenone (ZEA), a nonsteroid estrogen that is a contaminant of cereal grains and causes estrogenic disorders in humans and animals. The ZEA backbone is synthesized from a single acetyl-CoA molecule and eight malonyl-CoA molecules. The reducing polyketide synthase ZEA2 is proposed to synthesize a reduced hexaketide intermediate by using different combinations of its reductive domains during each round of condensation. The hexaketide thioester is then transacylated to the non-reducing polyketide synthase ZEA1 and is further condensed with three malonyl-CoAs without reductive tailoring to yield a mixed reduced/unreduced nonaketide. ZEA1 must be able to interact with ZEA2 to facilitate starter-unit acyltransfer and initiate polyketide biosynthesis. ZEA1 also mediates the required C2-C7 cyclization to form the resorcylate core and catalyzes the formation of the macrolactone. ZEA1 exhibits broad starter-unit specificities toward fatty acyl-CoAs ranging in sizes between C6 and C16 and displays the highest activity toward decanoyl-CoA. ZEB1 is then responsible for the chemical conversion of beta-zearalenonol (beta-ZOL) to ZEA in the biosynthetic pathway. The sequence is that of Non-reducing polyketide synthase ZEA1 from Gibberella zeae (strain ATCC MYA-4620 / CBS 123657 / FGSC 9075 / NRRL 31084 / PH-1) (Wheat head blight fungus).